The following is a 547-amino-acid chain: Chaperonin GroEL (547 aa).

Residues 29–32 (TLGP), 86–90 (DGTTT), Gly-413, 478–480 (DVL), and Asp-494 contribute to the ATP site.

It belongs to the chaperonin (HSP60) family. Forms a cylinder of 14 subunits composed of two heptameric rings stacked back-to-back. Interacts with the co-chaperonin GroES.

The protein resides in the cytoplasm. The catalysed reaction is ATP + H2O + a folded polypeptide = ADP + phosphate + an unfolded polypeptide.. Functionally, together with its co-chaperonin GroES, plays an essential role in assisting protein folding. The GroEL-GroES system forms a nano-cage that allows encapsulation of the non-native substrate proteins and provides a physical environment optimized to promote and accelerate protein folding. The protein is Chaperonin GroEL of Alkaliphilus metalliredigens (strain QYMF).